A 195-amino-acid chain; its full sequence is dITP/XTP pyrophosphatase (195 aa).

A substrate-binding site is contributed by 9–14 (TNNQGK). Mg(2+) is bound by residues glutamate 39 and aspartate 68. Catalysis depends on aspartate 68, which acts as the Proton acceptor. Substrate is bound by residues serine 69, 146 to 149 (FGYD), lysine 169, and 174 to 175 (HR).

It belongs to the HAM1 NTPase family. Homodimer. Mg(2+) serves as cofactor.

It catalyses the reaction XTP + H2O = XMP + diphosphate + H(+). The enzyme catalyses dITP + H2O = dIMP + diphosphate + H(+). The catalysed reaction is ITP + H2O = IMP + diphosphate + H(+). Its function is as follows. Pyrophosphatase that catalyzes the hydrolysis of nucleoside triphosphates to their monophosphate derivatives, with a high preference for the non-canonical purine nucleotides XTP (xanthosine triphosphate), dITP (deoxyinosine triphosphate) and ITP. Seems to function as a house-cleaning enzyme that removes non-canonical purine nucleotides from the nucleotide pool, thus preventing their incorporation into DNA/RNA and avoiding chromosomal lesions. This is dITP/XTP pyrophosphatase from Gloeobacter violaceus (strain ATCC 29082 / PCC 7421).